The chain runs to 291 residues: Ribose-phosphate pyrophosphokinase (291 aa).

Residues 34 to 36 (DGE) and 92 to 93 (RQ) contribute to the ATP site. Histidine 125 and aspartate 165 together coordinate Mg(2+). The active site involves lysine 188. 2 residues coordinate D-ribose 5-phosphate: arginine 190 and aspartate 214.

This sequence belongs to the ribose-phosphate pyrophosphokinase family. Class III (archaeal) subfamily. Mg(2+) serves as cofactor.

It localises to the cytoplasm. The enzyme catalyses D-ribose 5-phosphate + ATP = 5-phospho-alpha-D-ribose 1-diphosphate + AMP + H(+). It participates in metabolic intermediate biosynthesis; 5-phospho-alpha-D-ribose 1-diphosphate biosynthesis; 5-phospho-alpha-D-ribose 1-diphosphate from D-ribose 5-phosphate (route I): step 1/1. Involved in the biosynthesis of the central metabolite phospho-alpha-D-ribosyl-1-pyrophosphate (PRPP) via the transfer of pyrophosphoryl group from ATP to 1-hydroxyl of ribose-5-phosphate (Rib-5-P). In Methanopyrus kandleri (strain AV19 / DSM 6324 / JCM 9639 / NBRC 100938), this protein is Ribose-phosphate pyrophosphokinase.